A 132-amino-acid polypeptide reads, in one-letter code: UPF0299 membrane protein YohJ (132 aa).

The next 4 helical transmembrane spans lie at 7 to 27 (IIWQYIRAFVLIYACLYAGIF), 31 to 51 (LLPITIPGSIIGMLILFVLLA), 63 to 83 (GCYVLIRYMALLFVPIGVGVM), and 93 to 113 (FGPVVVSCAISTLVVFVVVSW).

Belongs to the UPF0299 family.

The protein resides in the cell inner membrane. The protein is UPF0299 membrane protein YohJ of Salmonella agona (strain SL483).